The following is a 215-amino-acid chain: UPF0502 protein YceH (215 aa).

The protein belongs to the UPF0502 family.

This is UPF0502 protein YceH from Salmonella paratyphi B (strain ATCC BAA-1250 / SPB7).